Here is a 357-residue protein sequence, read N- to C-terminus: DNA replication and repair protein RecF (357 aa).

An ATP-binding site is contributed by 30–37; sequence GANGSGKT.

It belongs to the RecF family.

The protein localises to the cytoplasm. In terms of biological role, the RecF protein is involved in DNA metabolism; it is required for DNA replication and normal SOS inducibility. RecF binds preferentially to single-stranded, linear DNA. It also seems to bind ATP. The sequence is that of DNA replication and repair protein RecF from Escherichia fergusonii (strain ATCC 35469 / DSM 13698 / CCUG 18766 / IAM 14443 / JCM 21226 / LMG 7866 / NBRC 102419 / NCTC 12128 / CDC 0568-73).